The primary structure comprises 389 residues: Alpha-2B adrenergic receptor (389 aa).

A helical transmembrane segment spans residues 1–25 (AIAAVITFLILFTIFGNALVILAVL). Residues 26–36 (TSRSLRAPQNL) are Cytoplasmic-facing. Residues 37–62 (FLVSLAAADILVATLIIPFSLANELL) traverse the membrane as a helical segment. Over 63-72 (GYWYFWRTWC) the chain is Extracellular. A disulfide bond links Cys-72 and Cys-151. Residues 73 to 95 (EVYLALDVLFCTSSIVHLCAISL) form a helical membrane-spanning segment. The Cytoplasmic segment spans residues 96–117 (DRYWAVSRALEYNSKRTPRRIK). Residues 118–140 (CIILTVWLIAAAISLPPLIYKGD) traverse the membrane as a helical segment. Residues 141–156 (QGPQPRGRPQCMLNQE) lie on the Extracellular side of the membrane. Residues 157 to 180 (AWYILSSSIGSFFAPCLIMILVYL) traverse the membrane as a helical segment. Residues 181-353 (RIYLIAKRSN…LTREKRFTFV (173 aa)) are Cytoplasmic-facing. 2 disordered regions span residues 192–218 (RGPR…PLAL) and 231–310 (DGEA…HLQQ). Basic and acidic residues predominate over residues 234 to 249 (ANGHSKLTGEKERETS). A helical transmembrane segment spans residues 354–377 (LTVVIGVFVLCWFPFFFSYSLGAI). Topologically, residues 378-386 (CPQHCKVPH) are extracellular. A helical transmembrane segment spans residues 387 to 389 (GLF).

It belongs to the G-protein coupled receptor 1 family. Adrenergic receptor subfamily. ADRA2B sub-subfamily. Interacts with RAB26. Interacts with PPP1R9B.

Its subcellular location is the cell membrane. Alpha-2 adrenergic receptors mediate the catecholamine-induced inhibition of adenylate cyclase through the action of G proteins. The polypeptide is Alpha-2B adrenergic receptor (ADRA2B) (Procavia capensis habessinica (Abyssinian hyrax)).